The sequence spans 288 residues: Bifunctional protein FolD (288 aa).

NADP(+) contacts are provided by residues 166–168 (GAS) and Ile-232.

This sequence belongs to the tetrahydrofolate dehydrogenase/cyclohydrolase family. As to quaternary structure, homodimer.

It catalyses the reaction (6R)-5,10-methylene-5,6,7,8-tetrahydrofolate + NADP(+) = (6R)-5,10-methenyltetrahydrofolate + NADPH. The catalysed reaction is (6R)-5,10-methenyltetrahydrofolate + H2O = (6R)-10-formyltetrahydrofolate + H(+). Its pathway is one-carbon metabolism; tetrahydrofolate interconversion. Functionally, catalyzes the oxidation of 5,10-methylenetetrahydrofolate to 5,10-methenyltetrahydrofolate and then the hydrolysis of 5,10-methenyltetrahydrofolate to 10-formyltetrahydrofolate. This is Bifunctional protein FolD from Salmonella heidelberg (strain SL476).